The chain runs to 448 residues: Asparagine--tRNA ligase (448 aa).

This sequence belongs to the class-II aminoacyl-tRNA synthetase family. Homodimer.

It localises to the cytoplasm. It carries out the reaction tRNA(Asn) + L-asparagine + ATP = L-asparaginyl-tRNA(Asn) + AMP + diphosphate + H(+). In Streptococcus mutans serotype c (strain ATCC 700610 / UA159), this protein is Asparagine--tRNA ligase.